The sequence spans 414 residues: MIOREX complex component 10 (414 aa).

A mitochondrion-targeting transit peptide spans 1–29 (MLSFRSLTSTFGFVSRFQIRRLGTSLSIQ). Residues 30-373 (NLEVQDGRWK…ISLLNERNST (344 aa)) are Mitochondrial matrix-facing. Residues 374-394 (FLEWIIIYLIAFELCFEIYHF) traverse the membrane as a helical segment. At 395-414 (YQKYSSYCSEPTNDDLDATK) the chain is on the mitochondrial intermembrane side.

This sequence belongs to the RMD1/sif2 family. In terms of assembly, associates with the mitochondrial ribosome.

Its subcellular location is the mitochondrion inner membrane. In terms of biological role, component of MIOREX complexes, large expressome-like assemblies of ribosomes with factors involved in all the steps of post-transcriptional gene expression. This Saccharomyces cerevisiae (strain ATCC 204508 / S288c) (Baker's yeast) protein is MIOREX complex component 10.